The chain runs to 276 residues: MKLCGFEVGLNQPLFLIAGPCVIESLQLQLDTAGVLKEITSKLGLNFIFKSSFDKANRTSGSSFRGPGLEEGLKVLEAVKTQIGVPVLTDVHEYTPIDEVATVVDVLQTPAFLVRQTDFIRNVCAVGKPVNIKKGQFLSPWDMKPVVEKAKSTGNSQILVCERGASFGYNNLVSDMRSLAVMRETGCPVVFDATHSVQLPGAQGGRSGGQREFVPVLARAAVAVGISGLFAETHPDPPNALSDGPNAWPLHTMAMLLETLVELDAVTKKRGFLEQD.

It belongs to the KdsA family.

Its subcellular location is the cytoplasm. The enzyme catalyses D-arabinose 5-phosphate + phosphoenolpyruvate + H2O = 3-deoxy-alpha-D-manno-2-octulosonate-8-phosphate + phosphate. It participates in carbohydrate biosynthesis; 3-deoxy-D-manno-octulosonate biosynthesis; 3-deoxy-D-manno-octulosonate from D-ribulose 5-phosphate: step 2/3. Its pathway is bacterial outer membrane biogenesis; lipopolysaccharide biosynthesis. This is 2-dehydro-3-deoxyphosphooctonate aldolase from Xylella fastidiosa (strain 9a5c).